A 506-amino-acid chain; its full sequence is Cytochrome P450 6a2 (506 aa).

Cys451 is a binding site for heme.

This sequence belongs to the cytochrome P450 family. Heme is required as a cofactor.

The protein resides in the endoplasmic reticulum membrane. Its subcellular location is the microsome membrane. Functionally, is involved in the breakdown of synthetic insecticides and may be involved in the metabolism of insect hormones. This Drosophila melanogaster (Fruit fly) protein is Cytochrome P450 6a2 (Cyp6a2).